We begin with the raw amino-acid sequence, 250 residues long: Isoprenyl transferase (250 aa).

Asp-26 is an active-site residue. Residue Asp-26 participates in Mg(2+) binding. Substrate contacts are provided by residues Gly-27–Arg-30, Trp-31, Arg-39, His-43, and Ser-71–Glu-73. Asn-74 serves as the catalytic Proton acceptor. Residues Trp-75, Arg-77, Arg-198, and Arg-204–Ser-206 each bind substrate. Glu-217 is a Mg(2+) binding site.

The protein belongs to the UPP synthase family. In terms of assembly, homodimer. The cofactor is Mg(2+).

Its function is as follows. Catalyzes the condensation of isopentenyl diphosphate (IPP) with allylic pyrophosphates generating different type of terpenoids. This Streptococcus agalactiae serotype V (strain ATCC BAA-611 / 2603 V/R) protein is Isoprenyl transferase.